Reading from the N-terminus, the 524-residue chain is GMP synthase [glutamine-hydrolyzing] (524 aa).

The Glutamine amidotransferase type-1 domain occupies 9–207 (RILILDFGSQ…VIHICQCIPN (199 aa)). The active-site Nucleophile is the C86. Active-site residues include H181 and E183. One can recognise a GMPS ATP-PPase domain in the interval 208-399 (WTTKHIIEDS…LGLPADLIYR (192 aa)). Position 235-241 (235-241 (SGGVDSA)) interacts with ATP.

As to quaternary structure, homodimer.

It catalyses the reaction XMP + L-glutamine + ATP + H2O = GMP + L-glutamate + AMP + diphosphate + 2 H(+). Its pathway is purine metabolism; GMP biosynthesis; GMP from XMP (L-Gln route): step 1/1. Functionally, catalyzes the synthesis of GMP from XMP. The chain is GMP synthase [glutamine-hydrolyzing] from Coxiella burnetii (strain RSA 331 / Henzerling II).